We begin with the raw amino-acid sequence, 135 residues long: ATP synthase epsilon chain (135 aa).

Basic and acidic residues predominate over residues 90–103 (DVRRAESAKERAES). A disordered region spans residues 90–115 (DVRRAESAKERAESHLNNNDEDTDIN).

This sequence belongs to the ATPase epsilon chain family. In terms of assembly, F-type ATPases have 2 components, CF(1) - the catalytic core - and CF(0) - the membrane proton channel. CF(1) has five subunits: alpha(3), beta(3), gamma(1), delta(1), epsilon(1). CF(0) has three main subunits: a, b and c.

It localises to the cell membrane. In terms of biological role, produces ATP from ADP in the presence of a proton gradient across the membrane. The protein is ATP synthase epsilon chain of Staphylococcus carnosus (strain TM300).